The following is a 1358-amino-acid chain: Protein STU1 (1358 aa).

Disordered stretches follow at residues 915-950 and 970-990; these read FVAD…SHGF and QPET…DESN. Positions 926–949 are enriched in basic and acidic residues; that stretch reads DDTKKNGSDVVDHEEIRDHEESHG. A compositionally biased stretch (acidic residues) spans 973 to 990; sequence TVDENVDPMEVDSPDESN.

The protein belongs to the CLASP family. Interacts with microtubules.

The protein localises to the cytoplasm. The protein resides in the cytoskeleton. It is found in the nucleus. Its subcellular location is the spindle. Microtubule binding protein that promotes the stabilization of dynamic microtubules. Required for mitotic spindle formation. In Kluyveromyces lactis (strain ATCC 8585 / CBS 2359 / DSM 70799 / NBRC 1267 / NRRL Y-1140 / WM37) (Yeast), this protein is Protein STU1 (STU1).